The chain runs to 692 residues: Glycine--tRNA ligase beta subunit (692 aa).

The protein belongs to the class-II aminoacyl-tRNA synthetase family. As to quaternary structure, tetramer of two alpha and two beta subunits.

It localises to the cytoplasm. It carries out the reaction tRNA(Gly) + glycine + ATP = glycyl-tRNA(Gly) + AMP + diphosphate. This Alteromonas mediterranea (strain DSM 17117 / CIP 110805 / LMG 28347 / Deep ecotype) protein is Glycine--tRNA ligase beta subunit.